The chain runs to 160 residues: SsrA-binding protein (160 aa).

The protein belongs to the SmpB family.

It is found in the cytoplasm. Required for rescue of stalled ribosomes mediated by trans-translation. Binds to transfer-messenger RNA (tmRNA), required for stable association of tmRNA with ribosomes. tmRNA and SmpB together mimic tRNA shape, replacing the anticodon stem-loop with SmpB. tmRNA is encoded by the ssrA gene; the 2 termini fold to resemble tRNA(Ala) and it encodes a 'tag peptide', a short internal open reading frame. During trans-translation Ala-aminoacylated tmRNA acts like a tRNA, entering the A-site of stalled ribosomes, displacing the stalled mRNA. The ribosome then switches to translate the ORF on the tmRNA; the nascent peptide is terminated with the 'tag peptide' encoded by the tmRNA and targeted for degradation. The ribosome is freed to recommence translation, which seems to be the essential function of trans-translation. This chain is SsrA-binding protein, found in Mycobacterium leprae (strain Br4923).